A 299-amino-acid polypeptide reads, in one-letter code: tRNA uridine(34) hydroxylase (299 aa).

The Rhodanese domain occupies 132–226; the sequence is AGRPVVMLDT…YFEEVGGAHY (95 aa). C186 serves as the catalytic Cysteine persulfide intermediate.

Belongs to the TrhO family.

It carries out the reaction uridine(34) in tRNA + AH2 + O2 = 5-hydroxyuridine(34) in tRNA + A + H2O. In terms of biological role, catalyzes oxygen-dependent 5-hydroxyuridine (ho5U) modification at position 34 in tRNAs. The protein is tRNA uridine(34) hydroxylase of Burkholderia mallei (strain NCTC 10247).